A 795-amino-acid polypeptide reads, in one-letter code: Phenylalanine--tRNA ligase beta subunit (795 aa).

Residues 39–148 (AGSFHGVVVG…ADAPIGTDIR (110 aa)) form the tRNA-binding domain. A B5 domain is found at 401–476 (PKRATITLRR…RVYGYNNIPD (76 aa)). Positions 454, 460, 463, and 464 each coordinate Mg(2+). An FDX-ACB domain is found at 701-794 (SRFPANRRDI…LKERFQASLR (94 aa)).

It belongs to the phenylalanyl-tRNA synthetase beta subunit family. Type 1 subfamily. Tetramer of two alpha and two beta subunits. Requires Mg(2+) as cofactor.

The protein localises to the cytoplasm. It catalyses the reaction tRNA(Phe) + L-phenylalanine + ATP = L-phenylalanyl-tRNA(Phe) + AMP + diphosphate + H(+). The sequence is that of Phenylalanine--tRNA ligase beta subunit from Shigella dysenteriae serotype 1 (strain Sd197).